The sequence spans 229 residues: Clathrin light chain B (229 aa).

Low complexity predominate over residues 1–17 (MADDFGFFSSSESGAPE). Residues 1–82 (MADDFGFFSS…NGDVFQEANG (82 aa)) are disordered. 2 positions are modified to phosphoserine: Ser-11 and Ser-13. Over residues 58–73 (GPTSGAGSEDMGTTVN) the composition is skewed to polar residues. The interval 93 to 155 (ADRLTQEPES…QVEKNKINNR (63 aa)) is involved in binding clathrin heavy chain. Thr-187 carries the phosphothreonine modification. Cys-199 and Cys-209 are joined by a disulfide. An N6-acetyllysine modification is found at Lys-204. Residue Ser-217 is modified to Phosphoserine.

The protein belongs to the clathrin light chain family. Clathrin coats are formed from molecules containing 3 heavy chains and 3 light chains. Interacts (via N-terminus) with HIP1. Interacts with HIP1R.

The protein localises to the cytoplasmic vesicle membrane. The protein resides in the membrane. It is found in the coated pit. Clathrin is the major protein of the polyhedral coat of coated pits and vesicles. The polypeptide is Clathrin light chain B (CLTB) (Homo sapiens (Human)).